Consider the following 148-residue polypeptide: Lysozyme C (148 aa).

An N-terminal signal peptide occupies residues 1 to 18 (MKALIILGLVLLSVTVQG). The C-type lysozyme domain occupies 19–148 (KIFERCELAR…VSQYVKGCGV (130 aa)). Disulfide bonds link Cys-24–Cys-146, Cys-48–Cys-134, Cys-83–Cys-99, and Cys-95–Cys-113. Active-site residues include Glu-53 and Asp-71.

The protein belongs to the glycosyl hydrolase 22 family. Monomer.

It is found in the secreted. It carries out the reaction Hydrolysis of (1-&gt;4)-beta-linkages between N-acetylmuramic acid and N-acetyl-D-glucosamine residues in a peptidoglycan and between N-acetyl-D-glucosamine residues in chitodextrins.. In terms of biological role, lysozymes have primarily a bacteriolytic function; those in tissues and body fluids are associated with the monocyte-macrophage system and enhance the activity of immunoagents. The polypeptide is Lysozyme C (LYZ) (Pygathrix nemaeus (Red-shanked douc langur)).